A 411-amino-acid chain; its full sequence is Citrate synthase (411 aa).

Residues H304 and D363 contribute to the active site.

This sequence belongs to the citrate synthase family.

The enzyme catalyses oxaloacetate + acetyl-CoA + H2O = citrate + CoA + H(+). It participates in carbohydrate metabolism; tricarboxylic acid cycle; isocitrate from oxaloacetate: step 1/2. This chain is Citrate synthase (gltA), found in Rickettsia akari.